The following is a 28-amino-acid chain: Fibrinogen alpha chain (28 aa).

Residue serine 3 is modified to Phosphoserine.

In terms of assembly, heterohexamer; disulfide linked. Contains 2 sets of 3 non-identical chains (alpha, beta and gamma). The 2 heterotrimers are in head to head conformation with the N-termini in a small central domain. Post-translationally, conversion of fibrinogen to fibrin is triggered by thrombin, which cleaves fibrinopeptides A and B from alpha and beta chains, and thus exposes the N-terminal polymerization sites responsible for the formation of the soft clot. The soft clot is converted into the hard clot by factor XIIIA which catalyzes the epsilon-(gamma-glutamyl)lysine cross-linking between gamma chains (stronger) and between alpha chains (weaker) of different monomers. Forms F13A-mediated cross-links between a glutamine and the epsilon-amino group of a lysine residue, forming fibronectin-fibrinogen heteropolymers.

Its subcellular location is the secreted. Functionally, cleaved by the protease thrombin to yield monomers which, together with fibrinogen beta (FGB) and fibrinogen gamma (FGG), polymerize to form an insoluble fibrin matrix. Fibrin has a major function in hemostasis as one of the primary components of blood clots. In addition, functions during the early stages of wound repair to stabilize the lesion and guide cell migration during re-epithelialization. Was originally thought to be essential for platelet aggregation, based on in vitro studies using anticoagulated blood. However, subsequent studies have shown that it is not absolutely required for thrombus formation in vivo. Enhances expression of SELP in activated platelets via an ITGB3-dependent pathway. Maternal fibrinogen is essential for successful pregnancy. Fibrin deposition is also associated with infection, where it protects against IFNG-mediated hemorrhage. May also facilitate the immune response via both innate and T-cell mediated pathways. This Canis lupus familiaris (Dog) protein is Fibrinogen alpha chain (FGA).